Consider the following 400-residue polypeptide: MQPTTEPHNAILVEKTPLETYVPPAKPSLIGLSRNELADRLGEIGVAPAQRKMRVQQLWHWMYFRGAQNFDEMTSISKGIRAELAQHFTVDRPEVVAEQISNDGTRKWLLRLPSGDNVEKAHEVECVYIPETDRGTLCVSSQVGCTLNCSFCHTGTQRLVRNLTAGEIVGQVMVARDRLNDWADREDGTRRVTNIVMMGMGEPLYNFDAVRDALLIVGDNEGIGISRRRITLSTSGVVPNIVRAGEEIGVMLAISLHAVRDELRNELVPLNRKYPIKELLQACRDYPGASNARRITFEYVMLKGVNDSLDDAKLLVKLLKGIHAKINLIPFNPWPGTAYECSDWDQIEKFSEYIFNAGYSSPVRTPRGRDILAACGQLKSETEKLSARERQTLRAMAMTD.

The active-site Proton acceptor is Glu125. The Radical SAM core domain occupies 131-372; that stretch reads ETDRGTLCVS…VRTPRGRDIL (242 aa). Cys138 and Cys375 are oxidised to a cystine. Cys145, Cys149, and Cys152 together coordinate [4Fe-4S] cluster. Residues 201 to 202, Ser233, 255 to 257, and Asn332 contribute to the S-adenosyl-L-methionine site; these read GE and SLH. Catalysis depends on Cys375, which acts as the S-methylcysteine intermediate.

The protein belongs to the radical SAM superfamily. RlmN family. It depends on [4Fe-4S] cluster as a cofactor.

The protein resides in the cytoplasm. The enzyme catalyses adenosine(2503) in 23S rRNA + 2 reduced [2Fe-2S]-[ferredoxin] + 2 S-adenosyl-L-methionine = 2-methyladenosine(2503) in 23S rRNA + 5'-deoxyadenosine + L-methionine + 2 oxidized [2Fe-2S]-[ferredoxin] + S-adenosyl-L-homocysteine. It catalyses the reaction adenosine(37) in tRNA + 2 reduced [2Fe-2S]-[ferredoxin] + 2 S-adenosyl-L-methionine = 2-methyladenosine(37) in tRNA + 5'-deoxyadenosine + L-methionine + 2 oxidized [2Fe-2S]-[ferredoxin] + S-adenosyl-L-homocysteine. In terms of biological role, specifically methylates position 2 of adenine 2503 in 23S rRNA and position 2 of adenine 37 in tRNAs. m2A2503 modification seems to play a crucial role in the proofreading step occurring at the peptidyl transferase center and thus would serve to optimize ribosomal fidelity. The sequence is that of Dual-specificity RNA methyltransferase RlmN from Bradyrhizobium diazoefficiens (strain JCM 10833 / BCRC 13528 / IAM 13628 / NBRC 14792 / USDA 110).